We begin with the raw amino-acid sequence, 202 residues long: Orotate phosphoribosyltransferase (202 aa).

Residues arginine 94, lysine 98, histidine 100, and 120 to 128 (EDLISTGGS) each bind 5-phospho-alpha-D-ribose 1-diphosphate. Serine 124 serves as a coordination point for orotate.

The protein belongs to the purine/pyrimidine phosphoribosyltransferase family. PyrE subfamily. In terms of assembly, homodimer. Mg(2+) serves as cofactor.

The enzyme catalyses orotidine 5'-phosphate + diphosphate = orotate + 5-phospho-alpha-D-ribose 1-diphosphate. The protein operates within pyrimidine metabolism; UMP biosynthesis via de novo pathway; UMP from orotate: step 1/2. Its function is as follows. Catalyzes the transfer of a ribosyl phosphate group from 5-phosphoribose 1-diphosphate to orotate, leading to the formation of orotidine monophosphate (OMP). This Staphylococcus haemolyticus (strain JCSC1435) protein is Orotate phosphoribosyltransferase.